The chain runs to 328 residues: L-lactate dehydrogenase (328 aa).

Residues valine 18, glutamate 39, lysine 46, tyrosine 71, and glycine 85–alanine 86 each bind NAD(+). Residues glutamine 88 and arginine 94 each contribute to the substrate site. NAD(+)-binding positions include serine 107, alanine 124 to asparagine 126, and serine 149. Asparagine 126 to aspartate 129 provides a ligand contact to substrate. Aspartate 154–arginine 157 is a substrate binding site. Beta-D-fructose 1,6-bisphosphate is bound by residues arginine 159 and histidine 174. Histidine 181 (proton acceptor) is an active-site residue. Tyrosine 226 bears the Phosphotyrosine mark. Residue threonine 235 participates in substrate binding.

It belongs to the LDH/MDH superfamily. LDH family. As to quaternary structure, homotetramer.

Its subcellular location is the cytoplasm. It catalyses the reaction (S)-lactate + NAD(+) = pyruvate + NADH + H(+). Its pathway is fermentation; pyruvate fermentation to lactate; (S)-lactate from pyruvate: step 1/1. Allosterically activated by fructose 1,6-bisphosphate (FBP). Its function is as follows. Catalyzes the conversion of lactate to pyruvate. The polypeptide is L-lactate dehydrogenase (Streptococcus pneumoniae (strain ATCC BAA-255 / R6)).